The chain runs to 186 residues: Peptidyl-tRNA hydrolase (186 aa).

Position 14 (tyrosine 14) interacts with tRNA. The Proton acceptor role is filled by histidine 19. Residues tyrosine 61, asparagine 63, and asparagine 107 each contribute to the tRNA site.

This sequence belongs to the PTH family. In terms of assembly, monomer.

The protein localises to the cytoplasm. The enzyme catalyses an N-acyl-L-alpha-aminoacyl-tRNA + H2O = an N-acyl-L-amino acid + a tRNA + H(+). Hydrolyzes ribosome-free peptidyl-tRNAs (with 1 or more amino acids incorporated), which drop off the ribosome during protein synthesis, or as a result of ribosome stalling. In terms of biological role, catalyzes the release of premature peptidyl moieties from peptidyl-tRNA molecules trapped in stalled 50S ribosomal subunits, and thus maintains levels of free tRNAs and 50S ribosomes. The sequence is that of Peptidyl-tRNA hydrolase from Helicobacter pylori (strain Shi470).